Reading from the N-terminus, the 139-residue chain is uncharacterized protein (139 aa).

Residues 8-63 (LRELRRARKLTVNQLAVYSGISSATISKIENGKRGTPKPATIKKLAAVLKVPYENL) form the HTH cro/C1-type domain. The segment at residues 19 to 38 (VNQLAVYSGISSATISKIEN) is a DNA-binding region (H-T-H motif).

This is an uncharacterized protein from Bacillus subtilis (strain 168).